We begin with the raw amino-acid sequence, 178 residues long: Large ribosomal subunit protein uL5 (178 aa).

This sequence belongs to the universal ribosomal protein uL5 family. In terms of assembly, part of the 50S ribosomal subunit; part of the 5S rRNA/L5/L18/L25 subcomplex. Contacts the 5S rRNA and the P site tRNA. Forms a bridge to the 30S subunit in the 70S ribosome.

In terms of biological role, this is one of the proteins that bind and probably mediate the attachment of the 5S RNA into the large ribosomal subunit, where it forms part of the central protuberance. In the 70S ribosome it contacts protein S13 of the 30S subunit (bridge B1b), connecting the 2 subunits; this bridge is implicated in subunit movement. Contacts the P site tRNA; the 5S rRNA and some of its associated proteins might help stabilize positioning of ribosome-bound tRNAs. The protein is Large ribosomal subunit protein uL5 of Psychrobacter cryohalolentis (strain ATCC BAA-1226 / DSM 17306 / VKM B-2378 / K5).